The sequence spans 181 residues: Regulator of G-protein signaling 5 (181 aa).

One can recognise an RGS domain in the interval 64 to 180 (SLDKLLQNNY…VRSEFYQEFI (117 aa)).

The protein resides in the cytoplasm. It is found in the membrane. Inhibits signal transduction by increasing the GTPase activity of G protein alpha subunits thereby driving them into their inactive GDP-bound form. Binds to G(i)-alpha and G(o)-alpha, but not to G(s)-alpha. The protein is Regulator of G-protein signaling 5 (RGS5) of Bos taurus (Bovine).